Reading from the N-terminus, the 830-residue chain is Periplasmic nitrate reductase (830 aa).

A signal peptide (tat-type signal) is located at residues 1-31; that stretch reads MKLSRRDFMKANAAVAAAAAAGMTIPTVAKA. In terms of domain architecture, 4Fe-4S Mo/W bis-MGD-type spans 39–95; that stretch reads IKWDKAPCRFCGTGCGVLVGTQNGRIVASQGDPDSPVNRGLNCIKGYFLPKIMYGKD. The [4Fe-4S] cluster site is built by C46, C49, C53, and C81. Mo-bis(molybdopterin guanine dinucleotide) is bound by residues K83, Q150, N175, C179, 212–219, 243–247, 262–264, M372, Q376, N482, 508–509, K531, D558, and 718–727; these read WGSNMAEM, STYEH, QTD, SD, and TGRVLEHWHT. Residue F794 participates in substrate binding. 2 residues coordinate Mo-bis(molybdopterin guanine dinucleotide): N802 and K819.

The protein belongs to the prokaryotic molybdopterin-containing oxidoreductase family. NasA/NapA/NarB subfamily. Component of the periplasmic nitrate reductase NapAB complex composed of NapA and NapB. [4Fe-4S] cluster serves as cofactor. The cofactor is Mo-bis(molybdopterin guanine dinucleotide). In terms of processing, predicted to be exported by the Tat system. The position of the signal peptide cleavage has not been experimentally proven.

The protein localises to the periplasm. It catalyses the reaction 2 Fe(II)-[cytochrome] + nitrate + 2 H(+) = 2 Fe(III)-[cytochrome] + nitrite + H2O. Catalytic subunit of the periplasmic nitrate reductase complex NapAB. Receives electrons from NapB and catalyzes the reduction of nitrate to nitrite. The protein is Periplasmic nitrate reductase of Yersinia pseudotuberculosis serotype IB (strain PB1/+).